We begin with the raw amino-acid sequence, 400 residues long: Argininosuccinate synthase (400 aa).

9–17 (AYSGGLDTS) is a binding site for ATP. Tyrosine 87 serves as a coordination point for L-citrulline. Glycine 117 is a binding site for ATP. Positions 119, 123, and 124 each coordinate L-aspartate. Residue asparagine 123 coordinates L-citrulline. L-citrulline is bound by residues arginine 127, serine 176, serine 185, glutamate 261, and tyrosine 273.

It belongs to the argininosuccinate synthase family. Type 1 subfamily. In terms of assembly, homotetramer.

The protein resides in the cytoplasm. It catalyses the reaction L-citrulline + L-aspartate + ATP = 2-(N(omega)-L-arginino)succinate + AMP + diphosphate + H(+). It functions in the pathway amino-acid biosynthesis; L-arginine biosynthesis; L-arginine from L-ornithine and carbamoyl phosphate: step 2/3. The sequence is that of Argininosuccinate synthase from Chlorobium luteolum (strain DSM 273 / BCRC 81028 / 2530) (Pelodictyon luteolum).